The primary structure comprises 166 residues: 3-isopropylmalate dehydratase small subunit 1 (166 aa).

The protein belongs to the LeuD family. LeuD type 2 subfamily. As to quaternary structure, heterodimer of LeuC and LeuD.

The catalysed reaction is (2R,3S)-3-isopropylmalate = (2S)-2-isopropylmalate. Its pathway is amino-acid biosynthesis; L-leucine biosynthesis; L-leucine from 3-methyl-2-oxobutanoate: step 2/4. Catalyzes the isomerization between 2-isopropylmalate and 3-isopropylmalate, via the formation of 2-isopropylmaleate. The sequence is that of 3-isopropylmalate dehydratase small subunit 1 (leuD1) from Thermotoga maritima (strain ATCC 43589 / DSM 3109 / JCM 10099 / NBRC 100826 / MSB8).